The following is a 28-amino-acid chain: Nicotinic acetylcholine receptor-binding protein Mnn-3C (28 aa).

Cysteines 3 and 24 form a disulfide.

Belongs to the three-finger toxin family. Short-chain subfamily. In terms of tissue distribution, expressed by the venom gland.

Its subcellular location is the secreted. In terms of biological role, binds and may inhibit nicotinic acetylcholine receptors (nAChR). This is Nicotinic acetylcholine receptor-binding protein Mnn-3C from Micrurus nigrocinctus (Central American coral snake).